Consider the following 565-residue polypeptide: Periplasmic trehalase (565 aa).

Residues 1–30 form the signal peptide; that stretch reads MKSPAPSRPQKMALIPACIFLCFAALSVQA. Substrate contacts are provided by residues Arg152, 159 to 160, Asn196, 205 to 207, 277 to 279, and Gly310; these read WD, RSQ, and RPE. Residues Asp312 and Glu496 each act as proton donor/acceptor in the active site. Glu511 serves as a coordination point for substrate. A disordered region spans residues 538–565; the sequence is PCDNVPATRPTVKSATTQPSTKEAQPTP. The segment covering 548–565 has biased composition (polar residues); the sequence is TVKSATTQPSTKEAQPTP.

Belongs to the glycosyl hydrolase 37 family. In terms of assembly, monomer.

It localises to the periplasm. The enzyme catalyses alpha,alpha-trehalose + H2O = alpha-D-glucose + beta-D-glucose. In terms of biological role, provides the cells with the ability to utilize trehalose at high osmolarity by splitting it into glucose molecules that can subsequently be taken up by the phosphotransferase-mediated uptake system. This is Periplasmic trehalase from Escherichia coli O8 (strain IAI1).